Consider the following 262-residue polypeptide: Indole-3-glycerol phosphate synthase (262 aa).

This sequence belongs to the TrpC family.

It carries out the reaction 1-(2-carboxyphenylamino)-1-deoxy-D-ribulose 5-phosphate + H(+) = (1S,2R)-1-C-(indol-3-yl)glycerol 3-phosphate + CO2 + H2O. It participates in amino-acid biosynthesis; L-tryptophan biosynthesis; L-tryptophan from chorismate: step 4/5. The chain is Indole-3-glycerol phosphate synthase from Leptothrix cholodnii (strain ATCC 51168 / LMG 8142 / SP-6) (Leptothrix discophora (strain SP-6)).